The following is an 89-amino-acid chain: Large ribosomal subunit protein bL27 (89 aa).

The interval 1–26 (MAHKKAGGSSRNGRDSAGQRRGVKRF) is disordered.

This sequence belongs to the bacterial ribosomal protein bL27 family.

The chain is Large ribosomal subunit protein bL27 from Nitratidesulfovibrio vulgaris (strain DSM 19637 / Miyazaki F) (Desulfovibrio vulgaris).